The following is a 386-amino-acid chain: Succinate--CoA ligase [ADP-forming] subunit beta (386 aa).

One can recognise an ATP-grasp domain in the interval 9 to 244 (KDLLTAYQLP…PSQENIRDVL (236 aa)). Residues lysine 46, 53–55 (GRG), valine 102, and glutamate 107 each bind ATP. Mg(2+) is bound by residues asparagine 199 and aspartate 213. Substrate is bound by residues asparagine 264 and 321 to 323 (GIM).

This sequence belongs to the succinate/malate CoA ligase beta subunit family. As to quaternary structure, heterotetramer of two alpha and two beta subunits. It depends on Mg(2+) as a cofactor.

It carries out the reaction succinate + ATP + CoA = succinyl-CoA + ADP + phosphate. It catalyses the reaction GTP + succinate + CoA = succinyl-CoA + GDP + phosphate. It participates in carbohydrate metabolism; tricarboxylic acid cycle; succinate from succinyl-CoA (ligase route): step 1/1. Succinyl-CoA synthetase functions in the citric acid cycle (TCA), coupling the hydrolysis of succinyl-CoA to the synthesis of either ATP or GTP and thus represents the only step of substrate-level phosphorylation in the TCA. The beta subunit provides nucleotide specificity of the enzyme and binds the substrate succinate, while the binding sites for coenzyme A and phosphate are found in the alpha subunit. The polypeptide is Succinate--CoA ligase [ADP-forming] subunit beta (Chlamydia trachomatis serovar L2 (strain ATCC VR-902B / DSM 19102 / 434/Bu)).